Consider the following 203-residue polypeptide: Thymidylate kinase (203 aa).

Position 14–21 (14–21 (GGEGSGKS)) interacts with ATP.

Belongs to the thymidylate kinase family.

The catalysed reaction is dTMP + ATP = dTDP + ADP. In terms of biological role, phosphorylation of dTMP to form dTDP in both de novo and salvage pathways of dTTP synthesis. The polypeptide is Thymidylate kinase (Rickettsia canadensis (strain McKiel)).